We begin with the raw amino-acid sequence, 92 residues long: Small ribosomal subunit protein uS19 (92 aa).

This sequence belongs to the universal ribosomal protein uS19 family.

Its function is as follows. Protein S19 forms a complex with S13 that binds strongly to the 16S ribosomal RNA. The sequence is that of Small ribosomal subunit protein uS19 from Clostridium botulinum (strain Eklund 17B / Type B).